The sequence spans 418 residues: Deubiquitinase and deneddylase Dub1 (418 aa).

Over residues 1-10 the composition is skewed to polar residues; sequence MLSPTNSISK. The tract at residues 1-23 is disordered; it reads MLSPTNSISKTVPAPPQDSSKPV. Residues 40–60 traverse the membrane as a helical segment; the sequence is TALAVLLVVVTLGLILLFYSF. The disordered stretch occupies residues 75 to 145; sequence STKEHPTISI…LPPKAPKPVK (71 aa). Positions 86 to 141 are enriched in pro residues; it reads EPLPSPPLAVPRPSTPPPPVISRPSTPPAPTPAISPPSTPSAPKPSTPPPLPPKAP. Residues His-288, Asp-305, and Cys-358 contribute to the active site.

It belongs to the peptidase C48 family.

The protein resides in the secreted. It localises to the host cell. Its subcellular location is the membrane. Effector proteins function to alter host cell physiology and promote bacterial survival in host tissues. This protease possesses deubiquitinating and deneddylating activities. The polypeptide is Deubiquitinase and deneddylase Dub1 (cdu1) (Chlamydia trachomatis serovar A (strain ATCC VR-571B / DSM 19440 / HAR-13)).